The following is a 532-amino-acid chain: MATGKEKNAKNPMSLLIVLMAGLFLAILNQTLLNVAMPHLMTEFGVSATTIQWLTTGYMLVNGVLIPLSAFLITRFGQRSLFLVAMFCFTLGTLVCGIAPNFSTMLIGRLIQAVGGGILQPLVMTTILLIFPPESRGKGMGIFGLAMMFAPAVGPTLSGWIIEHYTWRIMFYGLVPIGAIVIIVAFFIFKNMVEPQKIKLDTLGAILSIVGFASLLYGVSEAGSDGWTDPIVLSTVIIGAIAIVAFVVQQLRHDDPMLDFRVFKYDIFSLSSVINIIITVALYTGMFLLPIYLQNLVGFTALQSGLLLLPGAIVMLIMSPISGILFDKFGPRPLAIIGLLVTVVTTYQYTQLTIDTPYTHIMLIYSIRAFGMSLLMMPVMTAGMNQLPARLNSHGTAMSNTLRQISGSIGTSLITTIYTNRTTFHYSQIADKTSTADPNFLHAFQNAVSNLMVNMNVSYDTAKTYVYSHIYKHASLDSNVMGINDAFMWATLFCVAGLILSIFLRDVRKDKLRKKKKEELSLLPAPKEAKES.

The next 13 helical transmembrane spans lie at 13–33 (MSLL…QTLL), 53–73 (WLTT…AFLI), 80–100 (SLFL…GIAP), 111–131 (IQAV…LLIF), 142–162 (IFGL…GWII), 169–189 (IMFY…FFIF), 203–223 (LGAI…SEAG), 231–251 (IVLS…VQQL), 273–293 (VINI…PIYL), 306–326 (LLLL…GILF), 334–354 (LAII…QLTI), 361–381 (IMLI…PVMT), and 483–503 (INDA…LSIF).

Belongs to the major facilitator superfamily. EmrB family.

Its subcellular location is the cell membrane. This is an uncharacterized protein from Bacillus subtilis (strain 168).